A 132-amino-acid polypeptide reads, in one-letter code: Large ribosomal subunit protein uL14 (132 aa).

Belongs to the universal ribosomal protein uL14 family. As to quaternary structure, part of the 50S ribosomal subunit. Forms a cluster with proteins L3 and L24e, part of which may contact the 16S rRNA in 2 intersubunit bridges.

Binds to 23S rRNA. Forms part of two intersubunit bridges in the 70S ribosome. This chain is Large ribosomal subunit protein uL14, found in Methanosphaera stadtmanae (strain ATCC 43021 / DSM 3091 / JCM 11832 / MCB-3).